We begin with the raw amino-acid sequence, 490 residues long: Aspartyl/glutamyl-tRNA(Asn/Gln) amidotransferase subunit B (490 aa).

This sequence belongs to the GatB/GatE family. GatB subfamily. Heterotrimer of A, B and C subunits.

The catalysed reaction is L-glutamyl-tRNA(Gln) + L-glutamine + ATP + H2O = L-glutaminyl-tRNA(Gln) + L-glutamate + ADP + phosphate + H(+). The enzyme catalyses L-aspartyl-tRNA(Asn) + L-glutamine + ATP + H2O = L-asparaginyl-tRNA(Asn) + L-glutamate + ADP + phosphate + 2 H(+). In terms of biological role, allows the formation of correctly charged Asn-tRNA(Asn) or Gln-tRNA(Gln) through the transamidation of misacylated Asp-tRNA(Asn) or Glu-tRNA(Gln) in organisms which lack either or both of asparaginyl-tRNA or glutaminyl-tRNA synthetases. The reaction takes place in the presence of glutamine and ATP through an activated phospho-Asp-tRNA(Asn) or phospho-Glu-tRNA(Gln). The chain is Aspartyl/glutamyl-tRNA(Asn/Gln) amidotransferase subunit B from Synechococcus sp. (strain JA-3-3Ab) (Cyanobacteria bacterium Yellowstone A-Prime).